The following is a 194-amino-acid chain: MVIPYVIEQTARGERVYDIYSRLLKDRIIFLGTPIDAQVANVVVAQLLFLDAQNPNQEIKLYINSPGGEVDAGLAIYDTMQFVRAPVSTIVIGMAASMAAVILAAGEKGRRYALPHAKVMIHQPWGGVRGTASDIAIQAQEILKAKKLLNEILAKHTGQPLEKVEKDTDRDYYLSAQEALEYGLIDQVVTREEA.

S97 functions as the Nucleophile in the catalytic mechanism. H122 is a catalytic residue.

This sequence belongs to the peptidase S14 family. Fourteen ClpP subunits assemble into 2 heptameric rings which stack back to back to give a disk-like structure with a central cavity, resembling the structure of eukaryotic proteasomes.

Its subcellular location is the cytoplasm. It carries out the reaction Hydrolysis of proteins to small peptides in the presence of ATP and magnesium. alpha-casein is the usual test substrate. In the absence of ATP, only oligopeptides shorter than five residues are hydrolyzed (such as succinyl-Leu-Tyr-|-NHMec, and Leu-Tyr-Leu-|-Tyr-Trp, in which cleavage of the -Tyr-|-Leu- and -Tyr-|-Trp bonds also occurs).. Functionally, cleaves peptides in various proteins in a process that requires ATP hydrolysis. Has a chymotrypsin-like activity. Plays a major role in the degradation of misfolded proteins. In Thermus thermophilus (strain ATCC BAA-163 / DSM 7039 / HB27), this protein is ATP-dependent Clp protease proteolytic subunit.